We begin with the raw amino-acid sequence, 165 residues long: Lipoprotein signal peptidase (165 aa).

4 consecutive transmembrane segments (helical) span residues 7-27, 28-48, 61-81, and 87-107; these read FFLL…KYWI, THTM…LYHV, FSHW…FWLW, and DKAL…GNLI. Catalysis depends on residues Asp117 and Asp136. Residues 128–148 traverse the membrane as a helical segment; that stretch reads SFAIFNLADTFITLGAISILI.

Belongs to the peptidase A8 family.

It is found in the cell inner membrane. It catalyses the reaction Release of signal peptides from bacterial membrane prolipoproteins. Hydrolyzes -Xaa-Yaa-Zaa-|-(S,diacylglyceryl)Cys-, in which Xaa is hydrophobic (preferably Leu), and Yaa (Ala or Ser) and Zaa (Gly or Ala) have small, neutral side chains.. It participates in protein modification; lipoprotein biosynthesis (signal peptide cleavage). In terms of biological role, this protein specifically catalyzes the removal of signal peptides from prolipoproteins. The sequence is that of Lipoprotein signal peptidase from Bartonella bacilliformis (strain ATCC 35685 / KC583 / Herrer 020/F12,63).